The following is a 226-amino-acid chain: Tyramine N-feruloyltransferase 4/11 (226 aa).

Residues 29 to 45 (HIYKLFYQIHEYHNYTH) form an important in binding site and for catalytic activity region. The 151-residue stretch at 72-222 (VLLLEVSPTP…VGDALQKYAD (151 aa)) folds into the N-acetyltransferase domain.

It belongs to the acetyltransferase family. In terms of assembly, homodimer.

It localises to the cytoplasm. The enzyme catalyses tyramine + (E)-feruloyl-CoA = N-[(E)-feruloyl]tyramine + CoA + H(+). Inhibited by (2-hydroxyphenyl)amino sulfinyl acetic acid 1,1-dimethylethyl ester, by DEPC and by N-ethylmaleimide. Synthesizes amides which are involved in stress response in the cell wall. Catalyzes the synthesis of hydroxycinnamic acid amides from hydroxycinnamoyl-CoA thioesters and various hydroxyphenylethylamines such as 4-coumaroyl-CoA and sinapoyl-CoA. This Nicotiana tabacum (Common tobacco) protein is Tyramine N-feruloyltransferase 4/11 (THT4).